Reading from the N-terminus, the 145-residue chain is Ventricular natriuretic peptide (145 aa).

The N-terminal stretch at 1-24 (MRMGKIAVGYGFLLLLVFQLGVRA) is a signal peptide. A disulfide bond links Cys-117 and Cys-133.

This sequence belongs to the natriuretic peptide family. Heart atrium and ventricle, and to a very low extent in brain.

Its subcellular location is the secreted. Its function is as follows. Exhibits natriuretic and vasodepressor activity. The chain is Ventricular natriuretic peptide (vnp) from Acipenser transmontanus (White sturgeon).